The following is a 310-amino-acid chain: p-hydroxybenzoic acid efflux pump subunit AaeA (310 aa).

A helical membrane pass occupies residues 12–32 (AITLVLVILAFIAIFRAWVYY).

It belongs to the membrane fusion protein (MFP) (TC 8.A.1) family.

Its subcellular location is the cell inner membrane. Its function is as follows. Forms an efflux pump with AaeB. This chain is p-hydroxybenzoic acid efflux pump subunit AaeA, found in Salmonella arizonae (strain ATCC BAA-731 / CDC346-86 / RSK2980).